Here is a 187-residue protein sequence, read N- to C-terminus: UPF0301 protein plu1183 (187 aa).

The protein belongs to the UPF0301 (AlgH) family.

The polypeptide is UPF0301 protein plu1183 (Photorhabdus laumondii subsp. laumondii (strain DSM 15139 / CIP 105565 / TT01) (Photorhabdus luminescens subsp. laumondii)).